Reading from the N-terminus, the 307-residue chain is HPr kinase/phosphorylase (307 aa).

Residues His136 and Lys157 contribute to the active site. Residue 151–158 (GESGIGKS) coordinates ATP. Position 158 (Ser158) interacts with Mg(2+). The active-site Proton acceptor; for phosphorylation activity. Proton donor; for dephosphorylation activity is the Asp175. Residues 198-207 (LEVRGMGIID) form an important for the catalytic mechanism of both phosphorylation and dephosphorylation region. Glu199 provides a ligand contact to Mg(2+). Residue Arg240 is part of the active site. The important for the catalytic mechanism of dephosphorylation stretch occupies residues 261–266 (PIRPGR).

Belongs to the HPrK/P family. Homohexamer. The cofactor is Mg(2+).

The catalysed reaction is [HPr protein]-L-serine + ATP = [HPr protein]-O-phospho-L-serine + ADP + H(+). It carries out the reaction [HPr protein]-O-phospho-L-serine + phosphate + H(+) = [HPr protein]-L-serine + diphosphate. Its function is as follows. Catalyzes the ATP- as well as the pyrophosphate-dependent phosphorylation of a specific serine residue in HPr, a phosphocarrier protein of the phosphoenolpyruvate-dependent sugar phosphotransferase system (PTS). HprK/P also catalyzes the pyrophosphate-producing, inorganic phosphate-dependent dephosphorylation (phosphorolysis) of seryl-phosphorylated HPr (P-Ser-HPr). The two antagonistic activities of HprK/P are regulated by several intracellular metabolites, which change their concentration in response to the absence or presence of rapidly metabolisable carbon sources (glucose, fructose, etc.) in the growth medium. Therefore, by controlling the phosphorylation state of HPr, HPrK/P is a sensor enzyme that plays a major role in the regulation of carbon metabolism and sugar transport: it mediates carbon catabolite repression (CCR), and regulates PTS-catalyzed carbohydrate uptake and inducer exclusion. This Clostridium perfringens (strain 13 / Type A) protein is HPr kinase/phosphorylase.